We begin with the raw amino-acid sequence, 104 residues long: Small ribosomal subunit protein bS6c (104 aa).

Belongs to the bacterial ribosomal protein bS6 family.

The protein resides in the plastid. It localises to the cyanelle. In terms of biological role, binds together with bS18 to 16S ribosomal RNA. This Cyanophora paradoxa protein is Small ribosomal subunit protein bS6c (rps6).